A 178-amino-acid chain; its full sequence is ATP-dependent protease subunit HslV (178 aa).

T7 is an active-site residue. 3 residues coordinate Na(+): G162, C165, and T168.

Belongs to the peptidase T1B family. HslV subfamily. As to quaternary structure, a double ring-shaped homohexamer of HslV is capped on each side by a ring-shaped HslU homohexamer. The assembly of the HslU/HslV complex is dependent on binding of ATP.

Its subcellular location is the cytoplasm. It carries out the reaction ATP-dependent cleavage of peptide bonds with broad specificity.. With respect to regulation, allosterically activated by HslU binding. Protease subunit of a proteasome-like degradation complex believed to be a general protein degrading machinery. This chain is ATP-dependent protease subunit HslV, found in Burkholderia cenocepacia (strain ATCC BAA-245 / DSM 16553 / LMG 16656 / NCTC 13227 / J2315 / CF5610) (Burkholderia cepacia (strain J2315)).